Reading from the N-terminus, the 253-residue chain is 3-dehydroquinate dehydratase (253 aa).

Residues 46–48 and Arg-82 each bind 3-dehydroquinate; that span reads EWR. The Proton donor/acceptor role is filled by His-143. Lys-170 functions as the Schiff-base intermediate with substrate in the catalytic mechanism. Positions 213, 232, and 236 each coordinate 3-dehydroquinate.

This sequence belongs to the type-I 3-dehydroquinase family. Homodimer.

The enzyme catalyses 3-dehydroquinate = 3-dehydroshikimate + H2O. It functions in the pathway metabolic intermediate biosynthesis; chorismate biosynthesis; chorismate from D-erythrose 4-phosphate and phosphoenolpyruvate: step 3/7. With respect to regulation, inhibited by flavonoids such as datiscetin, naringenin, marein and phloretin. Its function is as follows. Involved in the third step of the chorismate pathway, which leads to the biosynthesis of aromatic amino acids (AroAA). Catalyzes the cis-dehydration of 3-dehydroquinate (DHQ) and introduces the first double bond of the aromatic ring to yield 3-dehydroshikimate. The reaction involves the formation of an imine intermediate between the keto group of 3-dehydroquinate and the epsilon-amino group of Lys-170 at the active site. This chain is 3-dehydroquinate dehydratase, found in Enterococcus faecalis (strain ATCC 700802 / V583).